A 614-amino-acid polypeptide reads, in one-letter code: MTMRSAVFKAAAAPAGGNPEQRLDYERAAALGGPEDEPGAAEAHFLPRHRKLKEPGPPLASSQGGSPAPSPAGCGGKGRGLLLPAGAAPGQQEESWGGSVPLPCPPPATKQAGIGGEPAAAGAGCSPRPKYQAVLPIQTGSLVAAAKEPTPWAGDKGGAASPAATASDPAGPPPLPLPGPPPLAPTATAGTLAASEGRWKSMRKSPLGGGGGSGASSQAACLKQILLLQLDLIEQQQQQLQAKEKEIEELKSERDTLLARIERMERRMQLVKKDNEKERHKLFQGYETEEREETELSEKIKLECQPELSETSQTLPPKPFSCGRSGKGHKRKSPFGSTERKTPVKKLAPEFSKVKTKTPKHSPIKEEPCGSLSETVCKRELRSQETPEKPRSSVDTPPRLSTPQKGPSTHPKEKAFSSEIEDLPYLSTTEMYLCRWHQPPPSPLPLRESSPKKEETVARCLMPSSVAGETSVLAVPSWRDHSVEPLRDPNPSDLLENLDDSVFSKRHAKLELDEKRRKRWDIQRIREQRILQRLQLRMYKKKGIQESEPEVTSFFPEPDDVESLMITPFLPVVAFGRPLPKLTPQNFELPWLDERSRCRLEIQKKQTPHRTCRK.

Disordered regions lie at residues 1–127 (MTMR…GCSP) and 147–217 (KEPT…GASS). Residues S66 and S126 each carry the phosphoserine modification. Residues 158–169 (GAASPAATASDP) are compositionally biased toward low complexity. The span at 170–184 (AGPPPLPLPGPPPLA) shows a compositional bias: pro residues. Residues 185–194 (PTATAGTLAA) are compositionally biased toward low complexity. S205 is subject to Phosphoserine. Positions 213–282 (SGASSQAACL…KDNEKERHKL (70 aa)) form a coiled coil. The interval 223-237 (KQILLLQLDLIEQQQ) is interaction with MSL2. Basic and acidic residues-rich tracts occupy residues 272–281 (KKDNEKERHK) and 294–304 (TELSEKIKLEC). Residues 272–420 (KKDNEKERHK…PKEKAFSSEI (149 aa)) are disordered. Residue K301 forms a Glycyl lysine isopeptide (Lys-Gly) (interchain with G-Cter in SUMO2) linkage. Positions 317–346 (PKPFSCGRSGKGHKRKSPFGSTERKTPVKK) match the Nuclear localization signal motif. An N6-acetyllysine modification is found at K353. Glycyl lysine isopeptide (Lys-Gly) (interchain with G-Cter in SUMO2) cross-links involve residues K365 and K378. Over residues 376–392 (VCKRELRSQETPEKPRS) the composition is skewed to basic and acidic residues. The residue at position 393 (S393) is a Phosphoserine. Polar residues predominate over residues 393 to 407 (SVDTPPRLSTPQKGP). T396 carries the phosphothreonine modification. S442 bears the Phosphoserine mark. The 120-residue stretch at 472 to 591 (VLAVPSWRDH…LTPQNFELPW (120 aa)) folds into the PEHE domain. Positions 496–514 (ENLDDSVFSKRHAKLELDE) are interaction with KAT8 HAT domain. Residues 505–519 (KRHAKLELDEKRRKR) carry the Bipartite nuclear localization signal motif. Residues 550 to 591 (EVTSFFPEPDDVESLMITPFLPVVAFGRPLPKLTPQNFELPW) form a sufficient for interaction with MSL3 MRG domain region.

Belongs to the msl-1 family. As to quaternary structure, component of a multisubunit histone acetyltransferase complex (MSL) at least composed of the KAT8/MOF/MYST1, MSL1/hampin, MSL2 and MSL3. Forms a MSL heterotetrameric core with MSL2. Interacts (via PEHE domain) with KAT8 (via HAT domain) and MSL3 (via MRG domain); both interactions are direct. Directly interacts with NUPR1. Interacts with TP53BP1; this interaction may be required for MSL1 DNA repair activity, but not for histone acetyltransferase activity. Interacts with TTC4, ECM2 and PIHD1. Sumoylated with SUMO1.

The protein resides in the nucleus. It is found in the nucleoplasm. The protein localises to the nucleus speckle. In terms of biological role, non-catalytic component of the MSL histone acetyltransferase complex, a multiprotein complex that mediates the majority of histone H4 acetylation at 'Lys-16' (H4K16ac), an epigenetic mark that prevents chromatin compaction. The MSL complex is required for chromosome stability and genome integrity by maintaining homeostatic levels of H4K16ac. The MSL complex is also involved in gene dosage by promoting up-regulation of genes expressed by the X chromosome. X up-regulation is required to compensate for autosomal biallelic expression. The MSL complex also participates in gene dosage compensation by promoting expression of Tsix non-coding RNA. Within the MSL complex, acts as a scaffold to tether MSL3 and KAT8 together for enzymatic activity regulation. Greatly enhances MSL2 E3 ubiquitin ligase activity, promoting monoubiquitination of histone H2B at 'Lys-34' (H2BK34Ub). This modification in turn stimulates histone H3 methylation at 'Lys-4' (H3K4me) and 'Lys-79' (H3K79me) and leads to gene activation, including that of HOXA9 and MEIS1. In Homo sapiens (Human), this protein is Male-specific lethal 1 homolog.